The sequence spans 530 residues: Potassium voltage-gated channel subfamily A member 6 (530 aa).

Residues 1 to 35 are disordered; that stretch reads MRSEKSLTLAAPGEVRGPEGEQQDAGEFQEAEGGG. Ser3 is modified (phosphoserine). Residues 21-30 are compositionally biased toward acidic residues; it reads EQQDAGEFQE. A helical membrane pass occupies residues 172-193; sequence PARGIAIVSVLVILISIVIFCL. Positions 203–239 are disordered; sequence GRGGSNEGSGTRMSPASRGSHEEEDEDEDSYAFPGSI. Phosphoserine; by CK2 is present on Ser222. The helical transmembrane segment at 264-285 threads the bilayer; that stretch reads FFLVETLCIVWFTFELLVRFSA. A lipid anchor (S-palmitoyl cysteine) is attached at Cys286. The helical transmembrane segment at 297–317 threads the bilayer; sequence MNIIDLVAIFPYFITLGTELV. The chain crosses the membrane as a helical; Voltage-sensor span at residues 339-359; it reads LAILRVIRLVRVFRIFKLSRH. The segment at 361–374 is S4-S5 linker; sequence KGLQILGKTLQASM. Residues 375–396 form a helical membrane-spanning segment; the sequence is RELGLLIFFLFIGVILFSSAVY. The helical intramembrane region spans 411–422; that stretch reads PDAFWWAVVTMT. A Selectivity filter motif is present at residues 423–428; that stretch reads TVGYGD. Residues 423-430 lie within the membrane without spanning it; the sequence is TVGYGDMY. The chain crosses the membrane as a helical span at residues 438–466; sequence IVGSLCAIAGVLTIALPVPVIVSNFNYFY. At Ser512 the chain carries Phosphoserine; by PKA. Positions 527–529 match the PDZ-binding motif; it reads LTE. Thr528 is subject to Phosphothreonine; by PKA.

This sequence belongs to the potassium channel family. A (Shaker) (TC 1.A.1.2) subfamily. Kv1.6/KCNA6 sub-subfamily. As to quaternary structure, homotetramer and heterotetramer of potassium channel proteins. Interacts with KCNAB1 and KCNAB2.

Its subcellular location is the cell membrane. It catalyses the reaction K(+)(in) = K(+)(out). Functionally, voltage-gated potassium channel that mediates transmembrane potassium transport in excitable membranes. Forms tetrameric potassium-selective channels through which potassium ions pass in accordance with their electrochemical gradient. The channel alternates between opened and closed conformations in response to the voltage difference across the membrane. Can form functional homotetrameric channels and heterotetrameric channels that contain variable proportions of KCNA1, KCNA2, KCNA4, KNCA5, KCNA6, and possibly other family members as well; channel properties depend on the type of alpha subunits that are part of the channel. Channel properties are modulated by cytoplasmic beta subunits that regulate the subcellular location of the alpha subunits and promote rapid inactivation. Homotetrameric channels display rapid activation and slow inactivation. The protein is Potassium voltage-gated channel subfamily A member 6 (Kcna6) of Rattus norvegicus (Rat).